The chain runs to 752 residues: Multifunctional tryptophan biosynthesis protein (752 aa).

One can recognise a Glutamine amidotransferase type-1 domain in the interval 23–223; it reads NVILIDNYDS…LELTAGTWDN (201 aa). 74-76 contacts L-glutamine; that stretch reads GPG. C102 functions as the Nucleophile; for GATase activity in the catalytic mechanism. Residues Q106 and 152-153 each bind L-glutamine; that span reads SL. Residues H197 and E199 each act as for GATase activity in the active site. Positions 239-503 are indole-3-glycerol phosphate synthase; it reads ILDKIYAHRK…DTSAFVAQLL (265 aa). An N-(5'-phosphoribosyl)anthranilate isomerase region spans residues 519–752; sequence LVKICGTRTE…FVKSAKSIRQ (234 aa).

The enzyme catalyses N-(5-phospho-beta-D-ribosyl)anthranilate = 1-(2-carboxyphenylamino)-1-deoxy-D-ribulose 5-phosphate. It carries out the reaction 1-(2-carboxyphenylamino)-1-deoxy-D-ribulose 5-phosphate + H(+) = (1S,2R)-1-C-(indol-3-yl)glycerol 3-phosphate + CO2 + H2O. The catalysed reaction is chorismate + L-glutamine = anthranilate + pyruvate + L-glutamate + H(+). Its pathway is amino-acid biosynthesis; L-tryptophan biosynthesis; L-tryptophan from chorismate: step 1/5. The protein operates within amino-acid biosynthesis; L-tryptophan biosynthesis; L-tryptophan from chorismate: step 3/5. It participates in amino-acid biosynthesis; L-tryptophan biosynthesis; L-tryptophan from chorismate: step 4/5. Trifunctional enzyme bearing the Gln amidotransferase (GATase) domain of anthranilate synthase, indole-glycerolphosphate synthase, and phosphoribosylanthranilate isomerase activities. This Penicillium chrysogenum (Penicillium notatum) protein is Multifunctional tryptophan biosynthesis protein (trpC).